We begin with the raw amino-acid sequence, 295 residues long: Putative 23S rRNA (guanine-N(1)-)-methyltransferase (295 aa).

Residues C11, C14, C31, and H35 each coordinate Zn(2+). S-adenosyl-L-methionine contacts are provided by residues Y74, 116–117, and H204; that span reads TG.

Belongs to the methyltransferase superfamily. RlmA family.

Functionally, confers strong resistance to mycinamicin (MM) and tylosin (TY). May function as methyltransferase. In Micromonospora griseorubida, this protein is Putative 23S rRNA (guanine-N(1)-)-methyltransferase (myrA).